We begin with the raw amino-acid sequence, 189 residues long: Coatomer subunit zeta (189 aa).

The protein belongs to the adaptor complexes small subunit family. As to quaternary structure, oligomeric complex that consists of at least the alpha, beta, beta', gamma, delta, epsilon and zeta subunits.

The protein resides in the cytoplasm. It localises to the golgi apparatus membrane. Its subcellular location is the cytoplasmic vesicle. The protein localises to the COPI-coated vesicle membrane. Functionally, the coatomer is a cytosolic protein complex that binds to dilysine motifs and reversibly associates with Golgi non-clathrin-coated vesicles, which further mediate biosynthetic protein transport from the ER, via the Golgi up to the trans Golgi network. Coatomer complex is required for budding from Golgi membranes, and is essential for the retrograde Golgi-to-ER transport of dilysine-tagged proteins. The zeta subunit may be involved in regulating the coat assembly and, hence, the rate of biosynthetic protein transport due to its association-dissociation properties with the coatomer complex. The sequence is that of Coatomer subunit zeta (RET3) from Saccharomyces cerevisiae (strain ATCC 204508 / S288c) (Baker's yeast).